A 175-amino-acid chain; its full sequence is Shikimate kinase (175 aa).

ATP is bound at residue 16 to 21 (GAGKST). Ser20 lines the Mg(2+) pocket. Substrate is bound by residues Asp38, Arg62, and Gly84. Arg122 lines the ATP pocket. Arg141 serves as a coordination point for substrate.

Belongs to the shikimate kinase family. Monomer. Requires Mg(2+) as cofactor.

It localises to the cytoplasm. It catalyses the reaction shikimate + ATP = 3-phosphoshikimate + ADP + H(+). Its pathway is metabolic intermediate biosynthesis; chorismate biosynthesis; chorismate from D-erythrose 4-phosphate and phosphoenolpyruvate: step 5/7. In terms of biological role, catalyzes the specific phosphorylation of the 3-hydroxyl group of shikimic acid using ATP as a cosubstrate. The chain is Shikimate kinase from Legionella pneumophila (strain Paris).